Reading from the N-terminus, the 321-residue chain is Sideroflexin-3 (321 aa).

An N-acetylmethionine modification is found at methionine 1. A run of 4 helical transmembrane segments spans residues 146–164 (LGTA…ALGL), 174–194 (LVGR…NIPL), 225–245 (IFQV…IPPV), and 266–286 (LQVG…CALF).

The protein belongs to the sideroflexin family.

The protein localises to the mitochondrion membrane. It carries out the reaction L-serine(in) = L-serine(out). In terms of biological role, mitochondrial serine transporter that mediates transport of serine into mitochondria, an important step of the one-carbon metabolism pathway. Mitochondrial serine is converted to glycine and formate, which then exits to the cytosol where it is used to generate the charged folates that serve as one-carbon donors. The sequence is that of Sideroflexin-3 (Sfxn3) from Rattus norvegicus (Rat).